A 240-amino-acid polypeptide reads, in one-letter code: Demethylmenaquinone methyltransferase (240 aa).

S-adenosyl-L-methionine is bound by residues threonine 62, aspartate 80, 102 to 103 (DA), and serine 119.

It belongs to the class I-like SAM-binding methyltransferase superfamily. MenG/UbiE family.

It carries out the reaction a 2-demethylmenaquinol + S-adenosyl-L-methionine = a menaquinol + S-adenosyl-L-homocysteine + H(+). Its pathway is quinol/quinone metabolism; menaquinone biosynthesis; menaquinol from 1,4-dihydroxy-2-naphthoate: step 2/2. Methyltransferase required for the conversion of demethylmenaquinol (DMKH2) to menaquinol (MKH2). The protein is Demethylmenaquinone methyltransferase of Beutenbergia cavernae (strain ATCC BAA-8 / DSM 12333 / CCUG 43141 / JCM 11478 / NBRC 16432 / NCIMB 13614 / HKI 0122).